A 221-amino-acid chain; its full sequence is Inositol phosphorylceramide synthase regulatory subunit KEI1 (221 aa).

The next 4 helical transmembrane spans lie at 11–31 (SFLGFMPLYLAVEIVLGISIL), 54–74 (WIAYLWSVFTLIVFSQGLYLI), 79–99 (LLVFSQICVLYTIDTISTCFF), and 154–174 (ILITLVSLIFRFYFNFILASF). The tract at residues 176-221 (QELLHHPKYLVDRDDVEQNLKNKPIWKRLWAKSQKGCYKLCKNLLE) is COPI vesicle-binding.

It belongs to the KEI1 family. In terms of assembly, component of the inositol phosphorylceramide synthase complex composed of at least AUR1 and KEI1. Interacts (via C-terminal region) with COP1 and SEC21. Note=The interaction with AUR1 seems to occur with the full-length protein before cleavage by KEX2 since both full-length and short chains of KEI1 interact with AUR1. In terms of processing, the precursor protein is cleaved into two polypeptide chains, KEI1N and KEI1C. The cleavage is performed in the Golgi apparatus by the KEX2 protease which recognizes residue Arg-135. Generation of KEX2 cleavage site may have been an accidental event in evolution without specific advantages or disadvantages in IPC synthesis.

Its subcellular location is the golgi apparatus membrane. Its function is as follows. Regulatory component of the inositol phosphorylceramide (ICP) synthase which catalyzes the addition of a phosphorylinositol group onto ceramide to form inositol phosphorylceramide, an essential step in sphingolipid biosynthesis. Helps the medial Golgi localization of IPC synthase in a COPI vesicle-dependent manner. The protein is Inositol phosphorylceramide synthase regulatory subunit KEI1 (KEI1) of Saccharomyces cerevisiae (strain ATCC 204508 / S288c) (Baker's yeast).